The sequence spans 816 residues: Protein EFR3 homolog B (816 aa).

Polar residues predominate over residues S206–Q219. The segment at S206–E230 is disordered. Over residues S221 to E230 the composition is skewed to basic and acidic residues.

It belongs to the EFR3 family. As to quaternary structure, component of a phosphatidylinositol 4-kinase (PI4K) complex. Palmitoylated at its N-terminus, anchoring the protein to the plasma membrane.

It is found in the cell membrane. In terms of biological role, component of a complex required to localize phosphatidylinositol 4-kinase (PI4K) to the plasma membrane. The complex acts as a regulator of phosphatidylinositol 4-phosphate (PtdIns(4)P) synthesis. In the complex, efr3b probably acts as the membrane-anchoring component. The polypeptide is Protein EFR3 homolog B (efr3b) (Danio rerio (Zebrafish)).